Reading from the N-terminus, the 337-residue chain is Ketol-acid reductoisomerase (NADP(+)) (337 aa).

The KARI N-terminal Rossmann domain maps to 3 to 183 (VEMFYDADAD…GGARAGVIKT (181 aa)). NADP(+)-binding positions include 26–29 (YGSQ), lysine 49, serine 52, serine 54, and 84–87 (DTAQ). Residue histidine 109 is part of the active site. An NADP(+)-binding site is contributed by glycine 135. In terms of domain architecture, KARI C-terminal knotted spans 184-329 (TFKEETETDL…KKLRDLMSWV (146 aa)). Residues aspartate 192, glutamate 196, glutamate 228, and glutamate 232 each contribute to the Mg(2+) site. Serine 253 serves as a coordination point for substrate.

This sequence belongs to the ketol-acid reductoisomerase family. Mg(2+) is required as a cofactor.

It catalyses the reaction (2R)-2,3-dihydroxy-3-methylbutanoate + NADP(+) = (2S)-2-acetolactate + NADPH + H(+). The catalysed reaction is (2R,3R)-2,3-dihydroxy-3-methylpentanoate + NADP(+) = (S)-2-ethyl-2-hydroxy-3-oxobutanoate + NADPH + H(+). It functions in the pathway amino-acid biosynthesis; L-isoleucine biosynthesis; L-isoleucine from 2-oxobutanoate: step 2/4. It participates in amino-acid biosynthesis; L-valine biosynthesis; L-valine from pyruvate: step 2/4. Its function is as follows. Involved in the biosynthesis of branched-chain amino acids (BCAA). Catalyzes an alkyl-migration followed by a ketol-acid reduction of (S)-2-acetolactate (S2AL) to yield (R)-2,3-dihydroxy-isovalerate. In the isomerase reaction, S2AL is rearranged via a Mg-dependent methyl migration to produce 3-hydroxy-3-methyl-2-ketobutyrate (HMKB). In the reductase reaction, this 2-ketoacid undergoes a metal-dependent reduction by NADPH to yield (R)-2,3-dihydroxy-isovalerate. This Mycolicibacterium vanbaalenii (strain DSM 7251 / JCM 13017 / BCRC 16820 / KCTC 9966 / NRRL B-24157 / PYR-1) (Mycobacterium vanbaalenii) protein is Ketol-acid reductoisomerase (NADP(+)).